The chain runs to 461 residues: tRNA-2-methylthio-N(6)-dimethylallyladenosine synthase (461 aa).

In terms of domain architecture, MTTase N-terminal spans 25–143; the sequence is PTYSIITHGC…LPYLIDRHLS (119 aa). Positions 34, 70, 104, 179, 183, and 186 each coordinate [4Fe-4S] cluster. The 231-residue stretch at 165-395 folds into the Radical SAM core domain; sequence RDNEYVGYVN…LDVAYPIFYE (231 aa). The 64-residue stretch at 398–461 folds into the TRAM domain; the sequence is KSYLGTIQEV…SFALTGEMVD (64 aa).

This sequence belongs to the methylthiotransferase family. MiaB subfamily. In terms of assembly, monomer. [4Fe-4S] cluster serves as cofactor.

Its subcellular location is the cytoplasm. The enzyme catalyses N(6)-dimethylallyladenosine(37) in tRNA + (sulfur carrier)-SH + AH2 + 2 S-adenosyl-L-methionine = 2-methylsulfanyl-N(6)-dimethylallyladenosine(37) in tRNA + (sulfur carrier)-H + 5'-deoxyadenosine + L-methionine + A + S-adenosyl-L-homocysteine + 2 H(+). Its function is as follows. Catalyzes the methylthiolation of N6-(dimethylallyl)adenosine (i(6)A), leading to the formation of 2-methylthio-N6-(dimethylallyl)adenosine (ms(2)i(6)A) at position 37 in tRNAs that read codons beginning with uridine. In Finegoldia magna (strain ATCC 29328 / DSM 20472 / WAL 2508) (Peptostreptococcus magnus), this protein is tRNA-2-methylthio-N(6)-dimethylallyladenosine synthase.